Here is a 539-residue protein sequence, read N- to C-terminus: CTP synthase (539 aa).

Residues 1–267 (MKEAKFIFVT…GTQVLEHFHL (267 aa)) form an amidoligase domain region. Serine 15 contacts CTP. Position 15 (serine 15) interacts with UTP. Residues 16–21 (SLGKGL) and aspartate 73 contribute to the ATP site. 2 residues coordinate Mg(2+): aspartate 73 and glutamate 141. Residues 148 to 150 (DIE), 188 to 193 (KTKPTQ), and lysine 224 each bind CTP. Residues 188 to 193 (KTKPTQ) and lysine 224 each bind UTP. In terms of domain architecture, Glutamine amidotransferase type-1 spans 292–536 (TVSIVGKYTE…IKAVVNKVKK (245 aa)). Glycine 359 lines the L-glutamine pocket. Cysteine 386 functions as the Nucleophile; for glutamine hydrolysis in the catalytic mechanism. Residues 387–390 (LGMQ), glutamate 410, and arginine 464 each bind L-glutamine. Catalysis depends on residues histidine 509 and glutamate 511.

Belongs to the CTP synthase family. In terms of assembly, homotetramer.

The catalysed reaction is UTP + L-glutamine + ATP + H2O = CTP + L-glutamate + ADP + phosphate + 2 H(+). The enzyme catalyses L-glutamine + H2O = L-glutamate + NH4(+). It carries out the reaction UTP + NH4(+) + ATP = CTP + ADP + phosphate + 2 H(+). The protein operates within pyrimidine metabolism; CTP biosynthesis via de novo pathway; CTP from UDP: step 2/2. Its activity is regulated as follows. Allosterically activated by GTP, when glutamine is the substrate; GTP has no effect on the reaction when ammonia is the substrate. The allosteric effector GTP functions by stabilizing the protein conformation that binds the tetrahedral intermediate(s) formed during glutamine hydrolysis. Inhibited by the product CTP, via allosteric rather than competitive inhibition. In terms of biological role, catalyzes the ATP-dependent amination of UTP to CTP with either L-glutamine or ammonia as the source of nitrogen. Regulates intracellular CTP levels through interactions with the four ribonucleotide triphosphates. The sequence is that of CTP synthase from Wolbachia sp. subsp. Brugia malayi (strain TRS).